Consider the following 426-residue polypeptide: Gamma-glutamyl phosphate reductase (426 aa).

Belongs to the gamma-glutamyl phosphate reductase family.

It is found in the cytoplasm. The enzyme catalyses L-glutamate 5-semialdehyde + phosphate + NADP(+) = L-glutamyl 5-phosphate + NADPH + H(+). The protein operates within amino-acid biosynthesis; L-proline biosynthesis; L-glutamate 5-semialdehyde from L-glutamate: step 2/2. Its function is as follows. Catalyzes the NADPH-dependent reduction of L-glutamate 5-phosphate into L-glutamate 5-semialdehyde and phosphate. The product spontaneously undergoes cyclization to form 1-pyrroline-5-carboxylate. The protein is Gamma-glutamyl phosphate reductase of Ralstonia pickettii (strain 12J).